The following is a 261-amino-acid chain: tRNA pseudouridine synthase A (261 aa).

The active-site Nucleophile is Asp51. Tyr109 contacts substrate.

This sequence belongs to the tRNA pseudouridine synthase TruA family. As to quaternary structure, homodimer.

The enzyme catalyses uridine(38/39/40) in tRNA = pseudouridine(38/39/40) in tRNA. Formation of pseudouridine at positions 38, 39 and 40 in the anticodon stem and loop of transfer RNAs. This Photobacterium profundum (strain SS9) protein is tRNA pseudouridine synthase A.